We begin with the raw amino-acid sequence, 369 residues long: NAD-dependent epimerase/dehydratase FUM13 (369 aa).

Tyr176 is an NADP(+) binding site.

It belongs to the NAD(P)-dependent epimerase/dehydratase family. Dihydroflavonol-4-reductase subfamily.

Its pathway is mycotoxin biosynthesis. In terms of biological role, NAD-dependent epimerase/dehydratase; part of the gene cluster that mediates the biosynthesis of fumonisins B1 (FB1), B2 (FB2), B3 (FB3), and B4 (FB4), which are carcinogenic mycotoxins. Within the pathway, FUM13 stereospecifically reduces the intermediate 3-keto intermediate 2-amino-3-oxo-12,16-dimethylicosane to the 3-hydroxyl product 2-amino-3-hydroxy-12,16-dimethylicosane. The biosynthesis starts with the FUM1-catalyzed carbon chain assembly from one molecule of acetyl-CoA, eight molecules of malonyl-CoA, and two molecules of methionine (in S-adenosyl form). The C18 polyketide chain is released from the enzyme by a nucleophilic attack of a carbanion, which is derived from R-carbon of alanine by decarboxylation, on the carbonyl carbon of polyketide acyl chain. This step is catalyzed by the pyridoxal 5'-phosphate-dependent aminoacyl transferase FUM8. The resultant 3-keto intermediate is then stereospecifically reduced to a 3-hydroxyl product by reductase FUM13. Subsequent oxidations at C-10 by the cytochrome P450 monooxygenase FUM2, C-14 and C-15 by FUM6, FUM12 or FUM15, tricarballylic esterification of the hydroxyl groups on C-14 and C-15 by acyltransferase FUM14, and C-5 hydroxylation by 2-keto-glutarate-dependent dioxygenase FUM3 furnish the biosynthesis of fumonisins. The tricarballylic moieties are most likely derived from the citric acid cycle, and their addition to the carbon backbone may involve FUM7, FUM10, FUM11 and FUM14. This chain is NAD-dependent epimerase/dehydratase FUM13, found in Gibberella moniliformis (strain M3125 / FGSC 7600) (Maize ear and stalk rot fungus).